The following is a 438-amino-acid chain: Serine--tRNA ligase (438 aa).

An L-serine-binding site is contributed by 235–237 (TAE). Residues 266-268 (RKE) and valine 282 contribute to the ATP site. Glutamate 289 contributes to the L-serine binding site. 355–358 (ELVS) is an ATP binding site. Threonine 393 serves as a coordination point for L-serine.

Belongs to the class-II aminoacyl-tRNA synthetase family. Type-1 seryl-tRNA synthetase subfamily. Homodimer. The tRNA molecule binds across the dimer.

The enzyme catalyses tRNA(Ser) + L-serine + ATP = L-seryl-tRNA(Ser) + AMP + diphosphate + H(+). It catalyses the reaction tRNA(Sec) + L-serine + ATP = L-seryl-tRNA(Sec) + AMP + diphosphate + H(+). Its pathway is aminoacyl-tRNA biosynthesis; selenocysteinyl-tRNA(Sec) biosynthesis; L-seryl-tRNA(Sec) from L-serine and tRNA(Sec): step 1/1. Its function is as follows. Catalyzes the attachment of serine to tRNA(Ser). Is also able to aminoacylate tRNA(Sec) with serine, to form the misacylated tRNA L-seryl-tRNA(Sec), which will be further converted into selenocysteinyl-tRNA(Sec). This Helianthus annuus (Common sunflower) protein is Serine--tRNA ligase.